The sequence spans 443 residues: Methyl-coenzyme M reductase subunit beta (443 aa).

Y367 is a coenzyme M binding site. G369 serves as a coordination point for coenzyme B.

Belongs to the methyl-coenzyme M reductase beta subunit family. As to quaternary structure, MCR is a hexamer of two alpha, two beta, and two gamma chains, forming a dimer of heterotrimers. It depends on coenzyme F430 as a cofactor.

Its subcellular location is the cytoplasm. The catalysed reaction is coenzyme B + methyl-coenzyme M = methane + coenzyme M-coenzyme B heterodisulfide. The protein operates within one-carbon metabolism; methyl-coenzyme M reduction; methane from methyl-coenzyme M: step 1/1. Its function is as follows. Component of the methyl-coenzyme M reductase (MCR) I that catalyzes the reductive cleavage of methyl-coenzyme M (CoM-S-CH3 or 2-(methylthio)ethanesulfonate) using coenzyme B (CoB or 7-mercaptoheptanoylthreonine phosphate) as reductant which results in the production of methane and the mixed heterodisulfide of CoB and CoM (CoM-S-S-CoB). This is the final step in methanogenesis. This Methanococcus vannielii protein is Methyl-coenzyme M reductase subunit beta (mcrB).